We begin with the raw amino-acid sequence, 126 residues long: Large ribosomal subunit protein bL12 (126 aa).

It belongs to the bacterial ribosomal protein bL12 family. Homodimer. Part of the ribosomal stalk of the 50S ribosomal subunit. Forms a multimeric L10(L12)X complex, where L10 forms an elongated spine to which 2 to 4 L12 dimers bind in a sequential fashion. Binds GTP-bound translation factors.

Its function is as follows. Forms part of the ribosomal stalk which helps the ribosome interact with GTP-bound translation factors. Is thus essential for accurate translation. The protein is Large ribosomal subunit protein bL12 of Acidobacterium capsulatum (strain ATCC 51196 / DSM 11244 / BCRC 80197 / JCM 7670 / NBRC 15755 / NCIMB 13165 / 161).